Reading from the N-terminus, the 359-residue chain is Guanine nucleotide-binding protein subunit alpha-11 (359 aa).

2 S-palmitoyl cysteine lipidation sites follow: Cys-9 and Cys-10. One can recognise a G-alpha domain in the interval 38-359 (RELKLLLLGT…QLNLKEYNLV (322 aa)). The interval 41–54 (KLLLLGTGESGKST) is G1 motif. Residues 46–53 (GTGESGKS) and 180–183 (LRVR) each bind GTP. Position 53 (Ser-53) interacts with Mg(2+). The interval 178 to 186 (DVLRVRVPT) is G2 motif. Thr-186 is a binding site for Mg(2+). The G3 motif stretch occupies residues 201–210 (FRMVDVGGQR). The G4 motif stretch occupies residues 270–277 (ILFLNKKD). Residues 274-277 (NKKD) and Ala-331 each bind GTP. Residues 329 to 334 (TCATDT) are G5 motif.

The protein belongs to the G-alpha family. G(q) subfamily. G proteins are composed of 3 units; alpha, beta and gamma. The alpha chain contains the guanine nucleotide binding site. Interacts with RGS22. Interacts with NTSR1.

Its subcellular location is the cell membrane. It localises to the cytoplasm. It catalyses the reaction GTP + H2O = GDP + phosphate + H(+). In terms of biological role, guanine nucleotide-binding proteins (G proteins) function as transducers downstream of G protein-coupled receptors (GPCRs) in numerous signaling cascades. The alpha chain contains the guanine nucleotide binding site and alternates between an active, GTP-bound state and an inactive, GDP-bound state. Signaling by an activated GPCR promotes GDP release and GTP binding. The alpha subunit has a low GTPase activity that converts bound GTP to GDP, thereby terminating the signal. Both GDP release and GTP hydrolysis are modulated by numerous regulatory proteins. Signaling is mediated via phospholipase C-beta-dependent inositol lipid hydrolysis for signal propagation: activates phospholipase C-beta: following GPCR activation, GNA11 activates PLC-beta (PLCB1, PLCB2, PLCB3 or PLCB4), leading to production of diacylglycerol (DAG) and inositol 1,4,5-trisphosphate (IP3). Transduces FFAR4 signaling in response to long-chain fatty acids (LCFAs). Together with GNAQ, required for heart development. In the respiratory epithelium, transmits OXGR1-dependent signals that lead to downstream intracellular Ca(2+) release and mucocilliary clearance of airborne pathogens. The protein is Guanine nucleotide-binding protein subunit alpha-11 (GNA11) of Sus scrofa (Pig).